Consider the following 227-residue polypeptide: Lectin (227 aa).

An N-terminal signal peptide occupies residues 1–28 (MTMTSTTTKAMAMAAAVLAAAAVAATNA). Gln29 carries the post-translational modification Pyrrolidone carboxylic acid. Chitin-binding type-1 domains are found at residues 29 to 70 (QTCG…ACCS), 71 to 113 (SQRC…PCRA), 114 to 156 (DIKC…ACCP), and 157 to 199 (EKRC…GCYK). 16 cysteine pairs are disulfide-bonded: Cys31-Cys46, Cys40-Cys52, Cys45-Cys59, Cys63-Cys68, Cys74-Cys89, Cys83-Cys95, Cys88-Cys102, Cys106-Cys111, Cys117-Cys132, Cys126-Cys138, Cys131-Cys145, Cys149-Cys154, Cys160-Cys175, Cys169-Cys181, Cys174-Cys188, and Cys192-Cys197. A substrate-binding site is contributed by 38–40 (MIC). Position 90–101 (90–101 (SQYGYCGFGSEY)) interacts with substrate. Position 142 to 143 (142 to 143 (SE)) interacts with substrate. A propeptide spanning residues 202 to 227 (DGMAAILANNQSVSFEGIIESVAELV) is cleaved from the precursor. N-linked (GlcNAc...) asparagine glycosylation occurs at Asn211.

Confined to root caps, several cell layers at the periphery of the coleorhiza and radicle, and in all cell layers of the coleoptile.

Functionally, N-acetyl-D-glucosamine binding lectin. In Oryza sativa subsp. japonica (Rice), this protein is Lectin.